The chain runs to 316 residues: Probable protein-L-isoaspartate O-methyltransferase (316 aa).

S-adenosyl-L-homocysteine contacts are provided by residues 103–106 (ATIS), His-111, Ser-136, 157–158 (EH), 187–188 (DG), Thr-263, and Gln-268. Ser-106 is an active-site residue.

Belongs to the methyltransferase superfamily. L-isoaspartyl/D-aspartyl protein methyltransferase family.

The protein localises to the cytoplasm. It localises to the cytosol. It catalyses the reaction [protein]-L-isoaspartate + S-adenosyl-L-methionine = [protein]-L-isoaspartate alpha-methyl ester + S-adenosyl-L-homocysteine. In terms of biological role, initiates the repair of damaged proteins by catalyzing methyl esterification of L-isoaspartyl and D-aspartyl residues produced by spontaneous isomerization and racemization of L-aspartyl and L-asparaginyl residues in aging peptides and proteins. This chain is Probable protein-L-isoaspartate O-methyltransferase (pcmA), found in Dictyostelium discoideum (Social amoeba).